We begin with the raw amino-acid sequence, 207 residues long: Large ribosomal subunit protein uL4 (207 aa).

The segment at R54–R74 is disordered.

It belongs to the universal ribosomal protein uL4 family. Part of the 50S ribosomal subunit.

Functionally, one of the primary rRNA binding proteins, this protein initially binds near the 5'-end of the 23S rRNA. It is important during the early stages of 50S assembly. It makes multiple contacts with different domains of the 23S rRNA in the assembled 50S subunit and ribosome. In terms of biological role, forms part of the polypeptide exit tunnel. The sequence is that of Large ribosomal subunit protein uL4 from Magnetococcus marinus (strain ATCC BAA-1437 / JCM 17883 / MC-1).